A 398-amino-acid polypeptide reads, in one-letter code: Type II secretion system protein L (398 aa).

At 1–248 (MNNHHTSSAA…RQPTPRRWRP (248 aa)) the chain is on the cytoplasmic side. The chain crosses the membrane as a helical span at residues 249-265 (VIVAALALLLLWSSNCL). Residues 266–398 (HDHLMLGQQA…GRLTLEGNDA (133 aa)) are Periplasmic-facing.

Belongs to the GSP L family. In terms of assembly, type II secretion system is composed of four main components: the outer membrane complex, the inner membrane complex, the cytoplasmic secretion ATPase and the periplasm-spanning pseudopilus. Forms homodimers. Interacts with PulM/GspM. Interacts with PulE/GspE and PulF/GspF.

The protein localises to the cell inner membrane. Inner membrane component of the type II secretion system required for the energy-dependent secretion of extracellular factors such as proteases and toxins from the periplasm. Plays a role in the complex assembly and recruits PulM resulting in a stable complex in the inner membrane. Provides thus a link between the energy-providing PulE protein in the cytoplasm and the rest of the T2SS machinery. The protein is Type II secretion system protein L (pulL) of Klebsiella pneumoniae.